Consider the following 208-residue polypeptide: dITP/XTP pyrophosphatase (208 aa).

Residue 15–20 participates in substrate binding; that stretch reads SHNAGK. Mg(2+) is bound by residues Glu47 and Asp76. The Proton acceptor role is filled by Asp76. Residues Ser77, 157-160, Lys180, and 185-186 each bind substrate; these read HGYD and HR.

This sequence belongs to the HAM1 NTPase family. Homodimer. Mg(2+) is required as a cofactor.

The enzyme catalyses XTP + H2O = XMP + diphosphate + H(+). It catalyses the reaction dITP + H2O = dIMP + diphosphate + H(+). It carries out the reaction ITP + H2O = IMP + diphosphate + H(+). Functionally, pyrophosphatase that catalyzes the hydrolysis of nucleoside triphosphates to their monophosphate derivatives, with a high preference for the non-canonical purine nucleotides XTP (xanthosine triphosphate), dITP (deoxyinosine triphosphate) and ITP. Seems to function as a house-cleaning enzyme that removes non-canonical purine nucleotides from the nucleotide pool, thus preventing their incorporation into DNA/RNA and avoiding chromosomal lesions. This chain is dITP/XTP pyrophosphatase, found in Gluconobacter oxydans (strain 621H) (Gluconobacter suboxydans).